The primary structure comprises 330 residues: Aspartate--ammonia ligase (330 aa).

It belongs to the class-II aminoacyl-tRNA synthetase family. AsnA subfamily.

It localises to the cytoplasm. It catalyses the reaction L-aspartate + NH4(+) + ATP = L-asparagine + AMP + diphosphate + H(+). It participates in amino-acid biosynthesis; L-asparagine biosynthesis; L-asparagine from L-aspartate (ammonia route): step 1/1. In Actinobacillus succinogenes (strain ATCC 55618 / DSM 22257 / CCUG 43843 / 130Z), this protein is Aspartate--ammonia ligase.